The chain runs to 932 residues: Eukaryotic translation initiation factor 3 subunit A (932 aa).

A PCI domain is found at 309 to 492; sequence KPATANFVIL…NSISFSSDLF (184 aa). Phosphoserine occurs at positions 374 and 501. Residues 537–862 are a coiled coil; it reads LRKQQAEAAY…DEEISRKLAE (326 aa). Basic and acidic residues predominate over residues 793–865; sequence AEEEAARAAE…ISRKLAEKAA (73 aa). The segment at 793–932 is disordered; it reads AEEEAARAAE…PPSRRNQQQQ (140 aa). Ser874, Ser875, and Ser877 each carry phosphoserine. Residues 877-893 are compositionally biased toward low complexity; it reads SPGAWRRGGASAGGVSR.

It belongs to the eIF-3 subunit A family. Component of the eukaryotic translation initiation factor 3 (eIF-3) complex. The eIF-3 complex appears to include tif32/eif3a, SPAC25G10.08/eif3b, tif33/eif3c, SPBC4C3.07/eif3f, tif35/eif3g and sum1/eif3i. This set of common subunits may also associate exclusively with either moe1/eif3d and int6/eif3e, or with SPAC821.05/eif3h and SPAC1751.03/eif3m. The eIF-3 complex may also include SPAC3A12.13c/eif3j.

It is found in the cytoplasm. In terms of biological role, RNA-binding component of the eukaryotic translation initiation factor 3 (eIF-3) complex, which is involved in protein synthesis of a specialized repertoire of mRNAs and, together with other initiation factors, stimulates binding of mRNA and methionyl-tRNAi to the 40S ribosome. The eIF-3 complex specifically targets and initiates translation of a subset of mRNAs involved in cell proliferation. The protein is Eukaryotic translation initiation factor 3 subunit A (tif32) of Schizosaccharomyces pombe (strain 972 / ATCC 24843) (Fission yeast).